The following is a 205-amino-acid chain: RNA pyrophosphohydrolase (205 aa).

The Nudix hydrolase domain maps to 6 to 149 (GFRPNVGIVL…KRGVYARALR (144 aa)). A Nudix box motif is present at residues 38–59 (GGMNTDETPVEAMYRELREETG). Residues 178 to 205 (GSSAAGHDRPRKRPRKRGGVLPVRINND) form a disordered region. Over residues 186–195 (RPRKRPRKRG) the composition is skewed to basic residues.

The protein belongs to the Nudix hydrolase family. RppH subfamily. Requires a divalent metal cation as cofactor.

Functionally, accelerates the degradation of transcripts by removing pyrophosphate from the 5'-end of triphosphorylated RNA, leading to a more labile monophosphorylated state that can stimulate subsequent ribonuclease cleavage. This chain is RNA pyrophosphohydrolase, found in Xanthomonas campestris pv. campestris (strain 8004).